A 151-amino-acid polypeptide reads, in one-letter code: Cytochrome c-type biogenesis protein CcmE 1 (151 aa).

Residues 1–8 (MNPLRKKR) are Cytoplasmic-facing. Residues 9–29 (LIIILAILVGVGAAVGLALSA) traverse the membrane as a helical; Signal-anchor for type II membrane protein segment. The Periplasmic portion of the chain corresponds to 30-151 (LQQNINLFYT…QSAPTPAKEG (122 aa)). His124 and Tyr128 together coordinate heme. The tract at residues 131 to 151 (PEVTKALKDSGQSAPTPAKEG) is disordered.

Belongs to the CcmE/CycJ family.

Its subcellular location is the cell inner membrane. In terms of biological role, heme chaperone required for the biogenesis of c-type cytochromes. Transiently binds heme delivered by CcmC and transfers the heme to apo-cytochromes in a process facilitated by CcmF and CcmH. This Pseudomonas fluorescens (strain Pf0-1) protein is Cytochrome c-type biogenesis protein CcmE 1.